A 699-amino-acid polypeptide reads, in one-letter code: Elongation factor G (699 aa).

The 276-residue stretch at 8–283 folds into the tr-type G domain; it reads EHIRNIGICA…AVVDFLPSPI (276 aa). Residues 17–24, 81–85, and 135–138 contribute to the GTP site; these read AHIDAGKT, DTPGH, and NKMD.

Belongs to the TRAFAC class translation factor GTPase superfamily. Classic translation factor GTPase family. EF-G/EF-2 subfamily.

It is found in the cytoplasm. In terms of biological role, catalyzes the GTP-dependent ribosomal translocation step during translation elongation. During this step, the ribosome changes from the pre-translocational (PRE) to the post-translocational (POST) state as the newly formed A-site-bound peptidyl-tRNA and P-site-bound deacylated tRNA move to the P and E sites, respectively. Catalyzes the coordinated movement of the two tRNA molecules, the mRNA and conformational changes in the ribosome. The polypeptide is Elongation factor G (Rickettsia sibirica (strain ATCC VR-151 / 246)).